The primary structure comprises 262 residues: Ribosomal RNA small subunit methyltransferase A (262 aa).

S-adenosyl-L-methionine-binding residues include His-11, Ile-13, Gly-38, Glu-60, Asp-85, and Asn-105.

It belongs to the class I-like SAM-binding methyltransferase superfamily. rRNA adenine N(6)-methyltransferase family. RsmA subfamily.

The protein resides in the cytoplasm. It catalyses the reaction adenosine(1518)/adenosine(1519) in 16S rRNA + 4 S-adenosyl-L-methionine = N(6)-dimethyladenosine(1518)/N(6)-dimethyladenosine(1519) in 16S rRNA + 4 S-adenosyl-L-homocysteine + 4 H(+). Functionally, specifically dimethylates two adjacent adenosines (A1518 and A1519) in the loop of a conserved hairpin near the 3'-end of 16S rRNA in the 30S particle. May play a critical role in biogenesis of 30S subunits. The sequence is that of Ribosomal RNA small subunit methyltransferase A from Neorickettsia sennetsu (strain ATCC VR-367 / Miyayama) (Ehrlichia sennetsu).